The following is a 1376-amino-acid chain: Ubiquitin carboxyl-terminal hydrolase 47 (1376 aa).

N6-acetyllysine is present on Lys122. The USP domain maps to 188–564; sequence VGLVNQAMTC…NAYMLIYRLK (377 aa). Cys197 (nucleophile) is an active-site residue. Residues 426 to 452 form a disordered region; sequence EKSPQTESCTDSGAENEGSCHSDQMSN. Polar residues predominate over residues 430-452; the sequence is QTESCTDSGAENEGSCHSDQMSN. Catalysis depends on His503, which acts as the Proton acceptor. Ser832 is modified (phosphoserine). Disordered regions lie at residues 835–863, 880–971, and 985–1025; these read SYSK…KGPA, LKSL…SSDT, and GLDS…ESGK. The segment covering 882–900 has biased composition (low complexity); that stretch reads SLSLQQQQQDGDNGDSSKS. 2 positions are modified to phosphoserine: Ser911 and Ser934. Residues 930–939 are compositionally biased toward polar residues; that stretch reads HIQTSDPENF. Residues 941–951 show a composition bias toward basic and acidic residues; it reads SEERSDSDVNN. Residues 954-970 are compositionally biased toward low complexity; the sequence is STSSVDSDILSSSHSSD. The segment covering 998 to 1007 has biased composition (basic and acidic residues); it reads KANEGKKETW. Over residues 1008-1021 the composition is skewed to acidic residues; it reads DTAEEDSGTDSEYD. At Ser1014 the chain carries Phosphoserine. Thr1016 carries the phosphothreonine modification. The residue at position 1018 (Ser1018) is a Phosphoserine.

The protein belongs to the peptidase C19 family. USP47 subfamily. Interacts with BTRC and FBXW11. Interacts with POLB.

It is found in the cytoplasm. The catalysed reaction is Thiol-dependent hydrolysis of ester, thioester, amide, peptide and isopeptide bonds formed by the C-terminal Gly of ubiquitin (a 76-residue protein attached to proteins as an intracellular targeting signal).. Functionally, ubiquitin-specific protease that specifically deubiquitinates monoubiquitinated DNA polymerase beta (POLB), stabilizing POLB thereby playing a role in base-excision repair (BER). Acts as a regulator of cell growth and genome integrity. May also indirectly regulate CDC25A expression at a transcriptional level. This chain is Ubiquitin carboxyl-terminal hydrolase 47 (Usp47), found in Mus musculus (Mouse).